A 99-amino-acid polypeptide reads, in one-letter code: Large ribosomal subunit protein bL21 (99 aa).

It belongs to the bacterial ribosomal protein bL21 family. In terms of assembly, part of the 50S ribosomal subunit. Contacts protein L20.

Its function is as follows. This protein binds to 23S rRNA in the presence of protein L20. The protein is Large ribosomal subunit protein bL21 of Mesomycoplasma hyopneumoniae (strain 7448) (Mycoplasma hyopneumoniae).